A 486-amino-acid polypeptide reads, in one-letter code: Glutamyl-tRNA(Gln) amidotransferase subunit A (486 aa).

Active-site charge relay system residues include K79 and S154. Catalysis depends on S178, which acts as the Acyl-ester intermediate.

Belongs to the amidase family. GatA subfamily. In terms of assembly, heterotrimer of A, B and C subunits.

The enzyme catalyses L-glutamyl-tRNA(Gln) + L-glutamine + ATP + H2O = L-glutaminyl-tRNA(Gln) + L-glutamate + ADP + phosphate + H(+). In terms of biological role, allows the formation of correctly charged Gln-tRNA(Gln) through the transamidation of misacylated Glu-tRNA(Gln) in organisms which lack glutaminyl-tRNA synthetase. The reaction takes place in the presence of glutamine and ATP through an activated gamma-phospho-Glu-tRNA(Gln). This Dehalococcoides mccartyi (strain ATCC BAA-2100 / JCM 16839 / KCTC 5957 / BAV1) protein is Glutamyl-tRNA(Gln) amidotransferase subunit A.